The sequence spans 481 residues: Cobyric acid synthase (481 aa).

The 187-residue stretch at 247 to 433 folds into the GATase cobBQ-type domain; it reads AFNVVVPLLP…LHGLFDVPDS (187 aa). Cys328 serves as the catalytic Nucleophile. His425 is a catalytic residue.

The protein belongs to the CobB/CobQ family. CobQ subfamily.

It participates in cofactor biosynthesis; adenosylcobalamin biosynthesis. Its function is as follows. Catalyzes amidations at positions B, D, E, and G on adenosylcobyrinic A,C-diamide. NH(2) groups are provided by glutamine, and one molecule of ATP is hydrogenolyzed for each amidation. The polypeptide is Cobyric acid synthase (Alcanivorax borkumensis (strain ATCC 700651 / DSM 11573 / NCIMB 13689 / SK2)).